Reading from the N-terminus, the 279-residue chain is High choriolytic enzyme 2 (279 aa).

A signal peptide spans 1-20 (MNLASSACLLLLFLLGIAQA). Residues 21–79 (LPVQNEEGHEEGNKEGHGEEGVEEGDEDDFVDFTTRILTSNNNTDQLLLEGDLVAPTNR) constitute a propeptide, activation peptide. A compositionally biased stretch (basic and acidic residues) spans 26-40 (EEGHEEGNKEGHGEE). The disordered stretch occupies residues 26–46 (EEGHEEGNKEGHGEEGVEEGD). A glycan (N-linked (GlcNAc...) asparagine) is linked at N62. Positions 80 to 279 (NAMKCWYNSC…TRSNVLYNCR (200 aa)) constitute a Peptidase M12A domain. 3 disulfides stabilise this stretch: C84/C89, C129/C278, and C150/C170. H178 serves as a coordination point for Zn(2+). E179 is a catalytic residue. Zn(2+) contacts are provided by H182 and H188.

Requires Zn(2+) as cofactor.

The protein resides in the zymogen granule. The catalysed reaction is Hydrolysis of the inner layer of fish egg envelope. Also hydrolysis of casein and small molecule substrates such as succinyl-Leu-Leu-Val-Tyr-|-7-(4-methyl)coumarylamide.. Its function is as follows. Participates in the breakdown of the egg envelope, which is derived from the egg extracellular matrix, at the time of hatching. Thus allowing the newly hatched fish to swim free. HCE binds tightly to the egg envelope while it exerts the choriolytic swelling action. The polypeptide is High choriolytic enzyme 2 (hceb) (Oryzias latipes (Japanese rice fish)).